The following is a 237-amino-acid chain: Endonuclease V (237 aa).

2 residues coordinate Mg(2+): aspartate 46 and aspartate 114.

The protein belongs to the endonuclease V family. The cofactor is Mg(2+).

It localises to the cytoplasm. The catalysed reaction is Endonucleolytic cleavage at apurinic or apyrimidinic sites to products with a 5'-phosphate.. DNA repair enzyme involved in the repair of deaminated bases. Selectively cleaves double-stranded DNA at the second phosphodiester bond 3' to a deoxyinosine leaving behind the intact lesion on the nicked DNA. The sequence is that of Endonuclease V from Xanthomonas axonopodis pv. citri (strain 306).